A 221-amino-acid polypeptide reads, in one-letter code: Phosphoribosylformylglycinamidine synthase subunit PurQ (221 aa).

The Glutamine amidotransferase type-1 domain maps to 8-221; it reads NVGIIRFPGT…GLKFFKSFLD (214 aa). The active-site Nucleophile is the Cys91. Catalysis depends on residues His198 and Glu200.

As to quaternary structure, part of the FGAM synthase complex composed of 1 PurL, 1 PurQ and 2 PurS subunits.

The protein resides in the cytoplasm. The catalysed reaction is N(2)-formyl-N(1)-(5-phospho-beta-D-ribosyl)glycinamide + L-glutamine + ATP + H2O = 2-formamido-N(1)-(5-O-phospho-beta-D-ribosyl)acetamidine + L-glutamate + ADP + phosphate + H(+). The enzyme catalyses L-glutamine + H2O = L-glutamate + NH4(+). It functions in the pathway purine metabolism; IMP biosynthesis via de novo pathway; 5-amino-1-(5-phospho-D-ribosyl)imidazole from N(2)-formyl-N(1)-(5-phospho-D-ribosyl)glycinamide: step 1/2. Its function is as follows. Part of the phosphoribosylformylglycinamidine synthase complex involved in the purines biosynthetic pathway. Catalyzes the ATP-dependent conversion of formylglycinamide ribonucleotide (FGAR) and glutamine to yield formylglycinamidine ribonucleotide (FGAM) and glutamate. The FGAM synthase complex is composed of three subunits. PurQ produces an ammonia molecule by converting glutamine to glutamate. PurL transfers the ammonia molecule to FGAR to form FGAM in an ATP-dependent manner. PurS interacts with PurQ and PurL and is thought to assist in the transfer of the ammonia molecule from PurQ to PurL. The chain is Phosphoribosylformylglycinamidine synthase subunit PurQ from Methanosphaera stadtmanae (strain ATCC 43021 / DSM 3091 / JCM 11832 / MCB-3).